A 280-amino-acid polypeptide reads, in one-letter code: UDP-2,3-diacylglucosamine pyrophosphatase LpxI (280 aa).

Residues Ala12, 74-75 (NV), Gln169, 187-188 (TD), Lys214, and 226-233 (LPTIGVAT) each bind substrate.

The protein belongs to the LpxI family. Homodimer. Mg(2+) is required as a cofactor.

It localises to the cell inner membrane. It carries out the reaction UDP-2-N,3-O-bis[(3R)-3-hydroxytetradecanoyl]-alpha-D-glucosamine + H2O = 2-N,3-O-bis[(3R)-3-hydroxytetradecanoyl]-alpha-D-glucosaminyl 1-phosphate + UMP + 2 H(+). The protein operates within glycolipid biosynthesis; lipid IV(A) biosynthesis; lipid IV(A) from (3R)-3-hydroxytetradecanoyl-[acyl-carrier-protein] and UDP-N-acetyl-alpha-D-glucosamine: step 4/6. Inhibited by high concentrations of Cu(2+) and Zn(2+). Completely inhibited by EDTA in vitro. In terms of biological role, hydrolyzes the pyrophosphate bond of UDP-2,3-diacylglucosamine to form 2,3-diacylglucosamine 1-phosphate (lipid X) and UMP by catalyzing the attack of water at the beta-P atom. Involved in the biosynthesis of lipid A, a phosphorylated glycolipid that anchors the lipopolysaccharide to the outer membrane of the cell. Can functionally complement lpxH deficiency in E.coli. Cannot use CDP-diacylglycerol as substrate. The polypeptide is UDP-2,3-diacylglucosamine pyrophosphatase LpxI (Caulobacter vibrioides (strain ATCC 19089 / CIP 103742 / CB 15) (Caulobacter crescentus)).